Here is a 463-residue protein sequence, read N- to C-terminus: Cytoplasmic 60S subunit biogenesis factor SPCC550.15c (463 aa).

C2H2-type zinc fingers lie at residues 5 to 30 (FACTTCTVAFNNAESQKIHWKSDWHH) and 70 to 94 (QNCEVCNKKFYSEGAYSSHMASKKH). Positions 109-136 (KLQSEDASSIASSTLSMGEPVVDSEIEE) are disordered. Residues 113-124 (EDASSIASSTLS) are compositionally biased toward polar residues. Phosphoserine is present on residues serine 150 and serine 155. The disordered stretch occupies residues 155–189 (SLHGRESEPSKTELATSIPQSNEASKSHLFTQEPT). The segment covering 167–188 (ELATSIPQSNEASKSHLFTQEP) has biased composition (polar residues). 2 consecutive C2H2-type zinc fingers follow at residues 208–231 (RDCLFCAASFSSFDTCKKHMKASH) and 259–283 (FTCLTCNREFKSLEAVRAHMQQKGH). Residues 317–338 (TVVEEDGSSGEGDWEDVSDDSD) are compositionally biased toward acidic residues. Disordered regions lie at residues 317–341 (TVVEEDGSSGEGDWEDVSDDSDNSS) and 444–463 (ANKMGIKNNTKKHFRDALLQ).

The protein belongs to the REI1 family. Associates with nascent pre-60S particles that have not yet entered the translating pool, and is released from mature 60S subunits.

It is found in the cytoplasm. In terms of biological role, pre-60S-associated factor involved in the cytoplasmic maturation of the 60S subunit. Involved in the dissociation and recycling of other late pre-60S factors before newly synthesized large ribosomal subunits enter translation. The chain is Cytoplasmic 60S subunit biogenesis factor SPCC550.15c from Schizosaccharomyces pombe (strain 972 / ATCC 24843) (Fission yeast).